The chain runs to 215 residues: Chaperone protein TorD (215 aa).

It belongs to the TorD/DmsD family. TorD subfamily.

It is found in the cytoplasm. In terms of biological role, involved in the biogenesis of TorA. Acts on TorA before the insertion of the molybdenum cofactor and, as a result, probably favors a conformation of the apoenzyme that is competent for acquiring the cofactor. In Vibrio atlanticus (strain LGP32) (Vibrio splendidus (strain Mel32)), this protein is Chaperone protein TorD.